Consider the following 289-residue polypeptide: Release factor glutamine methyltransferase (289 aa).

Residues 122 to 126, Asp-145, Trp-174, and Asn-189 each bind S-adenosyl-L-methionine; that span reads GVGSG. 189–192 contacts substrate; sequence NPPY.

Belongs to the protein N5-glutamine methyltransferase family. PrmC subfamily.

It carries out the reaction L-glutaminyl-[peptide chain release factor] + S-adenosyl-L-methionine = N(5)-methyl-L-glutaminyl-[peptide chain release factor] + S-adenosyl-L-homocysteine + H(+). Methylates the class 1 translation termination release factors RF1/PrfA and RF2/PrfB on the glutamine residue of the universally conserved GGQ motif. The chain is Release factor glutamine methyltransferase from Caulobacter vibrioides (strain ATCC 19089 / CIP 103742 / CB 15) (Caulobacter crescentus).